The primary structure comprises 947 residues: Translation initiation factor IF-2 (947 aa).

The disordered stretch occupies residues 69 to 353 (RRRKEVPQEE…TPKPQKKTEV (285 aa)). A compositionally biased stretch (low complexity) spans 81–108 (APPAAAEEPSSVDTAVAEEAPAEEVQPV). The segment covering 139–155 (PVVEEVIAEPAVEEVVE) has biased composition (acidic residues). Basic and acidic residues-rich tracts occupy residues 215-226 (VTKEKPKVEKAT) and 246-262 (KRQE…ERPK). A compositionally biased stretch (low complexity) spans 264–284 (AKPSGGPAPRAKEAAPQAAVP). The segment covering 327–337 (QVYEPERDERR) has biased composition (basic and acidic residues). Over residues 338-348 (MRRGKKTPKPQ) the composition is skewed to basic residues. Residues 447–616 (PRPPVVTIMG…LLQAEVLELK (170 aa)) form the tr-type G domain. Residues 456 to 463 (GHVDHGKT) are G1. 456–463 (GHVDHGKT) provides a ligand contact to GTP. Positions 481–485 (GITQH) are G2. Residues 502 to 505 (DTPG) are G3. GTP is bound by residues 502–506 (DTPGH) and 556–559 (NKMD). The tract at residues 556 to 559 (NKMD) is G4. The tract at residues 592–594 (SAK) is G5.

It belongs to the TRAFAC class translation factor GTPase superfamily. Classic translation factor GTPase family. IF-2 subfamily.

The protein resides in the cytoplasm. In terms of biological role, one of the essential components for the initiation of protein synthesis. Protects formylmethionyl-tRNA from spontaneous hydrolysis and promotes its binding to the 30S ribosomal subunits. Also involved in the hydrolysis of GTP during the formation of the 70S ribosomal complex. The sequence is that of Translation initiation factor IF-2 from Syntrophotalea carbinolica (strain DSM 2380 / NBRC 103641 / GraBd1) (Pelobacter carbinolicus).